We begin with the raw amino-acid sequence, 236 residues long: MAQAGRTGYDNREIVMKYIHYKLSQRGYEWDVGDVDAAPLGAAPTPGIFSFQPESNPTPAVHRDMAARTSPLRPIVATTGPTLSPVPPVVHLTLRRAGDDFSRRYRRDFAEMSSQLHLTPFTARGRFATVVEELFRDGVNWGRIVAFFEFGGVMCVESVNREMSPLVDNIALWMTEYLNRHLHTWIQDNGGWDAFVELYGPTMQPLFDFSWLSLKALLSLALVGACITLGAYLGHK.

The BH4 signature appears at 10 to 30 (DNREIVMKYIHYKLSQRGYEW). Residue Thr-69 is modified to Phosphothreonine; by MAPK8. Ser-70 is subject to Phosphoserine; by MAPK8 and PKC. At Ser-84 the chain carries Phosphoserine; by MAPK8. The short motif at 90 to 104 (VHLTLRRAGDDFSRR) is the BH3 element. The BH1 signature appears at 133-152 (ELFRDGVNWGRIVAFFEFGG). A BH2 motif is present at residues 184 to 199 (TWIQDNGGWDAFVELY). A helical membrane pass occupies residues 209-230 (FSWLSLKALLSLALVGACITLG).

This sequence belongs to the Bcl-2 family. As to quaternary structure, forms homodimers, and heterodimers with BAX, BAD, BAK and Bcl-X(L). Heterodimerization with BAX requires intact BH1 and BH2 motifs, and is necessary for anti-apoptotic activity. Component of the complex, at least composed of LRPPRC, BECN1 and BCL2; the interactions prevent BECN1 from forming an autophagy-inducing complex with PIK3C3. Interacts with EI24. Also interacts with APAF1, BBC3, BCL2L1, BNIPL, MRPL41 and TP53BP2. Binding to FKBP8 seems to target BCL2 to the mitochondria and probably interferes with the binding of BCL2 to its targets. Interacts with BAG1 in an ATP-dependent manner. Interacts with RAF1 (the 'Ser-338' and 'Ser-339' phosphorylated form). Interacts (via the BH4 domain) with EGLN3; the interaction prevents the formation of the BAX-BCL2 complex and inhibits the anti-apoptotic activity of BCL2. Interacts with G0S2; this interaction also prevents the formation of the anti-apoptotic BAX-BCL2 complex. Interacts with RTL10/BOP. Interacts with the SCF(FBXO10) complex. Interacts (via the loop between motifs BH4 and BH3) with NLRP1 (via LRR repeats), but not with NLRP2, NLRP3, NLRP4, PYCARD, nor MEFV. Interacts with GIMAP3/IAN4, GIMAP4/IAN1 and GIMAP5/IAN5. Interacts with BCAP31. Interacts with IRF3; the interaction is inhibited by Sendai virus infection. Interacts with BECN1; thereby inhibiting autophagy in non-starvation conditions. Interacts with AMBRA1; thereby inhibiting autophagy. Phosphorylation/dephosphorylation on Ser-70 regulates anti-apoptotic activity. Growth factor-stimulated phosphorylation on Ser-70 by PKC is required for the anti-apoptosis activity and occurs during the G2/M phase of the cell cycle. In the absence of growth factors, BCL2 appears to be phosphorylated by other protein kinases such as ERKs and stress-activated kinases. Phosphorylated by MAPK8/JNK1 at Thr-69, Ser-70 and Ser-84, which stimulates starvation-induced autophagy. Dephosphorylated by protein phosphatase 2A (PP2A). In terms of processing, proteolytically cleaved by caspases during apoptosis. The cleaved protein, lacking the BH4 motif, has pro-apoptotic activity, causes the release of cytochrome c into the cytosol promoting further caspase activity. Post-translationally, monoubiquitinated by PRKN, leading to an increase in its stability. Ubiquitinated by SCF(FBXO10), leading to its degradation by the proteasome.

The protein resides in the mitochondrion outer membrane. The protein localises to the nucleus membrane. Its subcellular location is the endoplasmic reticulum membrane. It is found in the cytoplasm. Its function is as follows. Suppresses apoptosis in a variety of cell systems including factor-dependent lymphohematopoietic and neural cells. Regulates cell death by controlling the mitochondrial membrane permeability. Appears to function in a feedback loop system with caspases. Inhibits caspase activity either by preventing the release of cytochrome c from the mitochondria and/or by binding to the apoptosis-activating factor (APAF-1). Also acts as an inhibitor of autophagy: interacts with BECN1 and AMBRA1 during non-starvation conditions and inhibits their autophagy function. May attenuate inflammation by impairing NLRP1-inflammasome activation, hence CASP1 activation and IL1B release. The polypeptide is Apoptosis regulator Bcl-2 (BCL2) (Canis lupus familiaris (Dog)).